The following is a 354-amino-acid chain: tRNA N6-adenosine threonylcarbamoyltransferase (354 aa).

Fe cation-binding residues include His-111 and His-115. Substrate contacts are provided by residues 134 to 138 (LVSGG), Asp-167, Gly-180, and Asn-279. Asp-319 provides a ligand contact to Fe cation.

The protein belongs to the KAE1 / TsaD family. The cofactor is Fe(2+).

The protein resides in the cytoplasm. The enzyme catalyses L-threonylcarbamoyladenylate + adenosine(37) in tRNA = N(6)-L-threonylcarbamoyladenosine(37) in tRNA + AMP + H(+). In terms of biological role, required for the formation of a threonylcarbamoyl group on adenosine at position 37 (t(6)A37) in tRNAs that read codons beginning with adenine. Is involved in the transfer of the threonylcarbamoyl moiety of threonylcarbamoyl-AMP (TC-AMP) to the N6 group of A37, together with TsaE and TsaB. TsaD likely plays a direct catalytic role in this reaction. This Neisseria meningitidis protein is tRNA N6-adenosine threonylcarbamoyltransferase.